Consider the following 228-residue polypeptide: Small ribosomal subunit protein uS7m (228 aa).

Residues 1–33 (MAASVRHLLKPWTPSLCLMRWSRYNPYYLDPEP) constitute a mitochondrion transit peptide.

The protein belongs to the universal ribosomal protein uS7 family. Component of the mitochondrial ribosome small subunit (28S) which comprises a 12S rRNA and about 30 distinct proteins.

Its subcellular location is the mitochondrion. The polypeptide is Small ribosomal subunit protein uS7m (mrps7) (Danio rerio (Zebrafish)).